Here is a 231-residue protein sequence, read N- to C-terminus: GrpE protein homolog, mitochondrial (231 aa).

Residues 49 to 71 form a disordered region; sequence SEKAGEKAEEKAEEQNLSAEEQK.

The protein belongs to the GrpE family. Component of the PAM complex, at least composed of mtHsp70, MGE1, TIM44, PAM16, PAM17 and PAM18.

It is found in the mitochondrion matrix. Its function is as follows. Essential component of the PAM complex, a complex required for the translocation of transit peptide-containing proteins from the inner membrane into the mitochondrial matrix in an ATP-dependent manner. Seems to control the nucleotide-dependent binding of SSC1 to substrate proteins. In Candida glabrata (strain ATCC 2001 / BCRC 20586 / JCM 3761 / NBRC 0622 / NRRL Y-65 / CBS 138) (Yeast), this protein is GrpE protein homolog, mitochondrial (mge1).